Here is a 66-residue protein sequence, read N- to C-terminus: Disk-determining factor A (66 aa).

Involved in cell-shape determination. Required for the formation of disks. The chain is Disk-determining factor A from Haloferax volcanii (strain ATCC 29605 / DSM 3757 / JCM 8879 / NBRC 14742 / NCIMB 2012 / VKM B-1768 / DS2) (Halobacterium volcanii).